A 123-amino-acid chain; its full sequence is Large ribosomal subunit protein bL19c (123 aa).

The protein belongs to the bacterial ribosomal protein bL19 family.

It localises to the plastid. Its subcellular location is the chloroplast. The polypeptide is Large ribosomal subunit protein bL19c (Pyropia yezoensis (Susabi-nori)).